A 125-amino-acid polypeptide reads, in one-letter code: 17 kDa gas vesicle protein (125 aa).

The protein belongs to the gas vesicle GvpC family.

It localises to the gas vesicle. Functionally, gas vesicles (GV) are hollow, gas filled proteinaceous nanostructures. During planktonic growth they allow positioning of the organism at a favorable depth for light or nutrient acquisition. The sequence is that of 17 kDa gas vesicle protein from Dactylococcopsis salina (strain PCC 8305) (Myxobactron salinum).